The sequence spans 351 residues: tRNA uridine(34) hydroxylase (351 aa).

One can recognise a Rhodanese domain in the interval 146–240 (DDPQALFVDM…YARRAREQGL (95 aa)). The Cysteine persulfide intermediate role is filled by Cys-200.

It belongs to the TrhO family.

The enzyme catalyses uridine(34) in tRNA + AH2 + O2 = 5-hydroxyuridine(34) in tRNA + A + H2O. In terms of biological role, catalyzes oxygen-dependent 5-hydroxyuridine (ho5U) modification at position 34 in tRNAs. This chain is tRNA uridine(34) hydroxylase, found in Sodalis glossinidius (strain morsitans).